A 278-amino-acid polypeptide reads, in one-letter code: tRNA pseudouridine synthase A (278 aa).

The active-site Nucleophile is the Asp52. A substrate-binding site is contributed by Tyr110. A disordered region spans residues 259-278; the sequence is SKRQNGTTKVEQPSSYVHEE. A compositionally biased stretch (polar residues) spans 261 to 278; the sequence is RQNGTTKVEQPSSYVHEE.

Belongs to the tRNA pseudouridine synthase TruA family. In terms of assembly, homodimer.

It catalyses the reaction uridine(38/39/40) in tRNA = pseudouridine(38/39/40) in tRNA. Functionally, formation of pseudouridine at positions 38, 39 and 40 in the anticodon stem and loop of transfer RNAs. This is tRNA pseudouridine synthase A from Chloroflexus aurantiacus (strain ATCC 29366 / DSM 635 / J-10-fl).